Here is a 56-residue protein sequence, read N- to C-terminus: Ovomucoid (56 aa).

The Kazal-like domain occupies 6–56; it reads VDCSDHPKPACLQEQKPLCGSDNKTYDNKCSFCNAVVDSNGTLTLSHFGKC. Cystine bridges form between Cys8–Cys38, Cys16–Cys35, and Cys24–Cys56. Asn45 carries an N-linked (GlcNAc...) asparagine glycan.

Its subcellular location is the secreted. The protein is Ovomucoid of Pipile pipile (Trinidad piping guan).